Reading from the N-terminus, the 152-residue chain is Large-conductance mechanosensitive channel (152 aa).

Transmembrane regions (helical) follow at residues 26 to 46 (VLDL…VGSA), 50 to 70 (ILTP…LFIT), and 92 to 112 (IGVF…IFWL).

It belongs to the MscL family. In terms of assembly, homopentamer.

It is found in the cell inner membrane. Channel that opens in response to stretch forces in the membrane lipid bilayer. May participate in the regulation of osmotic pressure changes within the cell. This is Large-conductance mechanosensitive channel from Gluconobacter oxydans (strain 621H) (Gluconobacter suboxydans).